The sequence spans 437 residues: Aspartokinase (437 aa).

The protein belongs to the aspartokinase family.

It catalyses the reaction L-aspartate + ATP = 4-phospho-L-aspartate + ADP. It participates in amino-acid biosynthesis; L-lysine biosynthesis via DAP pathway; (S)-tetrahydrodipicolinate from L-aspartate: step 1/4. The protein operates within amino-acid biosynthesis; L-methionine biosynthesis via de novo pathway; L-homoserine from L-aspartate: step 1/3. It functions in the pathway amino-acid biosynthesis; L-threonine biosynthesis; L-threonine from L-aspartate: step 1/5. The chain is Aspartokinase (lysC) from Chlamydia muridarum (strain MoPn / Nigg).